The chain runs to 338 residues: Deoxyhypusine hydroxylase (338 aa).

5 HEAT-like PBS-type repeats span residues 71–97, 104–130, 200–233, 238–264, and 271–298; these read LKHELAYCLGQTRNPDAVAFLQQVLKD, CRHEAAEALGALGYEDSLEILKALKDD, QRYRAMFALRDLASPPDLPTAVQAVDALAKGLKD, FRHEVAFVFGQLCHPASVPSLTECLSN, and VRHEAAEALGSLGDVEGVEDTLKKFLND. Positions 73, 74, 106, and 107 each coordinate Fe cation. Residues histidine 240, glutamate 241, histidine 273, and glutamate 274 each contribute to the Fe cation site.

It belongs to the deoxyhypusine hydroxylase family. Fe(2+) serves as cofactor.

The protein resides in the cytoplasm. It localises to the nucleus. It catalyses the reaction [eIF5A protein]-deoxyhypusine + AH2 + O2 = [eIF5A protein]-hypusine + A + H2O. It functions in the pathway protein modification; eIF5A hypusination. In terms of biological role, catalyzes the hydroxylation of the N(6)-(4-aminobutyl)-L-lysine intermediate to form hypusine, an essential post-translational modification only found in mature eIF-5A factor. This Aspergillus niger (strain ATCC MYA-4892 / CBS 513.88 / FGSC A1513) protein is Deoxyhypusine hydroxylase (lia1).